The chain runs to 475 residues: Aspartyl/glutamyl-tRNA(Asn/Gln) amidotransferase subunit B (475 aa).

The protein belongs to the GatB/GatE family. GatB subfamily. Heterotrimer of A, B and C subunits.

The catalysed reaction is L-glutamyl-tRNA(Gln) + L-glutamine + ATP + H2O = L-glutaminyl-tRNA(Gln) + L-glutamate + ADP + phosphate + H(+). It catalyses the reaction L-aspartyl-tRNA(Asn) + L-glutamine + ATP + H2O = L-asparaginyl-tRNA(Asn) + L-glutamate + ADP + phosphate + 2 H(+). Its function is as follows. Allows the formation of correctly charged Asn-tRNA(Asn) or Gln-tRNA(Gln) through the transamidation of misacylated Asp-tRNA(Asn) or Glu-tRNA(Gln) in organisms which lack either or both of asparaginyl-tRNA or glutaminyl-tRNA synthetases. The reaction takes place in the presence of glutamine and ATP through an activated phospho-Asp-tRNA(Asn) or phospho-Glu-tRNA(Gln). This Thermoanaerobacter sp. (strain X514) protein is Aspartyl/glutamyl-tRNA(Asn/Gln) amidotransferase subunit B.